The chain runs to 358 residues: Isopentenyl-diphosphate delta-isomerase (358 aa).

Substrate is bound at residue 12-13 (RK). FMN contacts are provided by residues 69 to 71 (AMT), serine 99, and asparagine 128. Glutamine 158 serves as a coordination point for substrate. Glutamate 159 contacts Mg(2+). Residues lysine 190, threonine 220, 267-269 (GIR), and 288-289 (AG) each bind FMN.

Belongs to the IPP isomerase type 2 family. Homooctamer. Dimer of tetramers. The cofactor is FMN. NADPH is required as a cofactor. Requires Mg(2+) as cofactor.

It is found in the cytoplasm. The catalysed reaction is isopentenyl diphosphate = dimethylallyl diphosphate. Involved in the biosynthesis of isoprenoids. Catalyzes the 1,3-allylic rearrangement of the homoallylic substrate isopentenyl (IPP) to its allylic isomer, dimethylallyl diphosphate (DMAPP). The sequence is that of Isopentenyl-diphosphate delta-isomerase from Listeria monocytogenes serotype 4a (strain HCC23).